The primary structure comprises 448 residues: Chaperone SurA (448 aa).

A signal peptide spans 1–27 (MKKTLRFAAVASGLVASLITVAPSASA). 2 PpiC domains span residues 185–288 (QQDL…RLVE) and 301–399 (IVQT…QVLG).

It is found in the periplasm. The enzyme catalyses [protein]-peptidylproline (omega=180) = [protein]-peptidylproline (omega=0). In terms of biological role, chaperone involved in the correct folding and assembly of outer membrane proteins. Recognizes specific patterns of aromatic residues and the orientation of their side chains, which are found more frequently in integral outer membrane proteins. May act in both early periplasmic and late outer membrane-associated steps of protein maturation. This Burkholderia mallei (strain ATCC 23344) protein is Chaperone SurA.